The sequence spans 469 residues: Glutamate--tRNA ligase (469 aa).

Positions 11-21 (PSPTGFIHLGN) match the 'HIGH' region motif. The span at 114–131 (QREAGEKPRYDGTWRPEP) shows a compositional bias: basic and acidic residues. The disordered stretch occupies residues 114–139 (QREAGEKPRYDGTWRPEPGKVLPEPP). The short motif at 243–247 (KMSKR) is the 'KMSKS' region element. K246 is a binding site for ATP.

The protein belongs to the class-I aminoacyl-tRNA synthetase family. Glutamate--tRNA ligase type 1 subfamily. As to quaternary structure, monomer.

The protein localises to the cytoplasm. It carries out the reaction tRNA(Glu) + L-glutamate + ATP = L-glutamyl-tRNA(Glu) + AMP + diphosphate. Catalyzes the attachment of glutamate to tRNA(Glu) in a two-step reaction: glutamate is first activated by ATP to form Glu-AMP and then transferred to the acceptor end of tRNA(Glu). The chain is Glutamate--tRNA ligase from Paraburkholderia xenovorans (strain LB400).